A 96-amino-acid polypeptide reads, in one-letter code: Large ribosomal subunit protein uL23 (96 aa).

This sequence belongs to the universal ribosomal protein uL23 family. As to quaternary structure, part of the 50S ribosomal subunit. Contacts protein L29, and trigger factor when it is bound to the ribosome.

Functionally, one of the early assembly proteins it binds 23S rRNA. One of the proteins that surrounds the polypeptide exit tunnel on the outside of the ribosome. Forms the main docking site for trigger factor binding to the ribosome. The polypeptide is Large ribosomal subunit protein uL23 (Clostridium novyi (strain NT)).